The following is a 182-amino-acid chain: Epoxyqueuosine reductase QueH (182 aa).

Residues Cys10, Cys11, Cys85, and Cys88 each coordinate [4Fe-4S] cluster. A disulfide bond links Cys165 and Cys167.

This sequence belongs to the QueH family.

The catalysed reaction is epoxyqueuosine(34) in tRNA + AH2 = queuosine(34) in tRNA + A + H2O. It functions in the pathway tRNA modification; tRNA-queuosine biosynthesis. Catalyzes the conversion of epoxyqueuosine (oQ) to queuosine (Q), which is a hypermodified base found in the wobble positions of tRNA(Asp), tRNA(Asn), tRNA(His) and tRNA(Tyr). The protein is Epoxyqueuosine reductase QueH of Dehalococcoides mccartyi (strain ATCC BAA-2266 / KCTC 15142 / 195) (Dehalococcoides ethenogenes (strain 195)).